A 57-amino-acid chain; its full sequence is Large ribosomal subunit protein bL32 (57 aa).

The segment covering 1–16 (MAVQKSRKTRSKRGMR) has biased composition (basic residues). The interval 1-45 (MAVQKSRKTRSKRGMRRSHDALTAPAQLSVDATSGETHRRHHMTA) is disordered.

This sequence belongs to the bacterial ribosomal protein bL32 family.

The chain is Large ribosomal subunit protein bL32 from Psychromonas ingrahamii (strain DSM 17664 / CCUG 51855 / 37).